Consider the following 697-residue polypeptide: Elongation factor G 2 (697 aa).

The 276-residue stretch at 5–280 (SKYRNIGIFA…AVVDYLPAPD (276 aa)) folds into the tr-type G domain. GTP is bound by residues 14-21 (AHVDAGKT), 78-82 (DTPGH), and 132-135 (NKLD).

It belongs to the TRAFAC class translation factor GTPase superfamily. Classic translation factor GTPase family. EF-G/EF-2 subfamily.

Its subcellular location is the cytoplasm. Functionally, catalyzes the GTP-dependent ribosomal translocation step during translation elongation. During this step, the ribosome changes from the pre-translocational (PRE) to the post-translocational (POST) state as the newly formed A-site-bound peptidyl-tRNA and P-site-bound deacylated tRNA move to the P and E sites, respectively. Catalyzes the coordinated movement of the two tRNA molecules, the mRNA and conformational changes in the ribosome. In Shewanella denitrificans (strain OS217 / ATCC BAA-1090 / DSM 15013), this protein is Elongation factor G 2.